The following is a 40-amino-acid chain: Dolichyl-diphosphooligosaccharide--protein glycosyltransferase subunit 4 (40 aa).

Residues 1 to 4 are Lumenal-facing; that stretch reads MITD. A helical membrane pass occupies residues 5–25; that stretch reads VQLAIFSNVLGVFLFLLVVAY. Residues 26 to 40 lie on the Cytoplasmic side of the membrane; the sequence is HYINANTGKSSIKTK.

Belongs to the OST4 family. Component of the oligosaccharyltransferase (OST) complex.

Its subcellular location is the endoplasmic reticulum membrane. In terms of biological role, subunit of the oligosaccharyl transferase (OST) complex that catalyzes the initial transfer of a defined glycan (Glc(3)Man(9)GlcNAc(2) in eukaryotes) from the lipid carrier dolichol-pyrophosphate to an asparagine residue within an Asn-X-Ser/Thr consensus motif in nascent polypeptide chains, the first step in protein N-glycosylation. N-glycosylation occurs cotranslationally and the complex associates with the Sec61 complex at the channel-forming translocon complex that mediates protein translocation across the endoplasmic reticulum (ER). All subunits are required for a maximal enzyme activity. This chain is Dolichyl-diphosphooligosaccharide--protein glycosyltransferase subunit 4, found in Drosophila virilis (Fruit fly).